Consider the following 270-residue polypeptide: Undecaprenyl-diphosphatase 1 (270 aa).

The next 7 membrane-spanning stretches (helical) occupy residues 5–25 (YYVLKYLILGLFQGLTEPIPI), 42–62 (IEGFSFELLVNSASLLAVLLI), 89–109 (FFFIIYLVIATIPAGVIGVLF), 117–137 (LKGVKMVGISLLITAVGLWII), 192–212 (FSFLLYIPVSLGGLLLSITDI), 220–240 (TLFVPYVVAFIATFIMTYISL), and 250–270 (GNLKYFSFYCIIVGVLTLIFL).

This sequence belongs to the UppP family.

The protein resides in the cell membrane. It catalyses the reaction di-trans,octa-cis-undecaprenyl diphosphate + H2O = di-trans,octa-cis-undecaprenyl phosphate + phosphate + H(+). Catalyzes the dephosphorylation of undecaprenyl diphosphate (UPP). Confers resistance to bacitracin. The protein is Undecaprenyl-diphosphatase 1 of Bacillus cereus (strain ATCC 14579 / DSM 31 / CCUG 7414 / JCM 2152 / NBRC 15305 / NCIMB 9373 / NCTC 2599 / NRRL B-3711).